A 332-amino-acid chain; its full sequence is 2,3-diketo-L-gulonate reductase (332 aa).

The active-site Proton donor is the His44. Residues 168-174 (ITMVDMS), 224-225 (WK), and 304-306 (GHE) contribute to the NAD(+) site.

It belongs to the LDH2/MDH2 oxidoreductase family. DlgD subfamily. As to quaternary structure, homodimer.

Its subcellular location is the cytoplasm. The enzyme catalyses 3-dehydro-L-gulonate + NAD(+) = 2,3-dioxo-L-gulonate + NADH + H(+). It catalyses the reaction 3-dehydro-L-gulonate + NADP(+) = 2,3-dioxo-L-gulonate + NADPH + H(+). Functionally, catalyzes the reduction of 2,3-diketo-L-gulonate in the presence of NADH, to form 3-keto-L-gulonate. The chain is 2,3-diketo-L-gulonate reductase from Salmonella heidelberg (strain SL476).